The following is a 234-amino-acid chain: Eukaryotic translation initiation factor 3 subunit K (234 aa).

In terms of domain architecture, PCI spans 46 to 219 (SDIEANLALL…EAKPATTTES (174 aa)).

The protein belongs to the eIF-3 subunit K family. In terms of assembly, component of the eukaryotic translation initiation factor 3 (eIF-3) complex.

The protein localises to the cytoplasm. Functionally, component of the eukaryotic translation initiation factor 3 (eIF-3) complex, which is involved in protein synthesis of a specialized repertoire of mRNAs and, together with other initiation factors, stimulates binding of mRNA and methionyl-tRNAi to the 40S ribosome. The eIF-3 complex specifically targets and initiates translation of a subset of mRNAs involved in cell proliferation. This chain is Eukaryotic translation initiation factor 3 subunit K, found in Yarrowia lipolytica (strain CLIB 122 / E 150) (Yeast).